A 203-amino-acid polypeptide reads, in one-letter code: Cardiotrophin-1 (203 aa).

Belongs to the IL-6 superfamily. As to expression, highly expressed in heart, skeletal muscle, liver, lung and kidney. Lower levels in testis and brain. No expression in spleen.

It is found in the secreted. Functionally, induces cardiac myocyte hypertrophy in vitro. Binds to and activates the ILST/gp130 receptor. The sequence is that of Cardiotrophin-1 (Ctf1) from Mus musculus (Mouse).